A 359-amino-acid chain; its full sequence is Fructose-bisphosphate aldolase (359 aa).

Residue Thr11 is modified to Phosphothreonine. Residue Lys27 forms a Glycyl lysine isopeptide (Lys-Gly) (interchain with G-Cter in ubiquitin) linkage. 2 positions are modified to phosphoserine: Ser56 and Ser63. Ser63 contributes to the D-glyceraldehyde 3-phosphate binding site. Lys73 participates in a covalent cross-link: Glycyl lysine isopeptide (Lys-Gly) (interchain with G-Cter in ubiquitin). Ser76 and Ser83 each carry phosphoserine. Lys85 participates in a covalent cross-link: Glycyl lysine isopeptide (Lys-Gly) (interchain with G-Cter in ubiquitin). The residue at position 96 (Ser96) is a Phosphoserine. Asp110 functions as the Proton donor in the catalytic mechanism. 2 residues coordinate Zn(2+): His111 and Asp145. A Phosphoserine modification is found at Ser147. Position 150 is a phosphothreonine (Thr150). Glu175 is a Zn(2+) binding site. Thr179 is modified (phosphothreonine). His227 contributes to the Zn(2+) binding site. Residue Gly228 coordinates dihydroxyacetone phosphate. His265 is a binding site for Zn(2+). Dihydroxyacetone phosphate contacts are provided by residues 266 to 268 (GGS) and 287 to 290 (NLDT). Ser268 bears the Phosphoserine mark. Thr290 is subject to Phosphothreonine. Residue Lys308 forms a Glycyl lysine isopeptide (Lys-Gly) (interchain with G-Cter in ubiquitin) linkage. Tyr310 is modified (phosphotyrosine). Residue Ser313 is modified to Phosphoserine.

It belongs to the class II fructose-bisphosphate aldolase family. In terms of assembly, homodimer. Zn(2+) serves as cofactor.

The catalysed reaction is beta-D-fructose 1,6-bisphosphate = D-glyceraldehyde 3-phosphate + dihydroxyacetone phosphate. The protein operates within carbohydrate degradation; glycolysis; D-glyceraldehyde 3-phosphate and glycerone phosphate from D-glucose: step 4/4. Its function is as follows. Catalyzes the aldol condensation of dihydroxyacetone phosphate (DHAP or glycerone-phosphate) with glyceraldehyde 3-phosphate (G3P) to form fructose 1,6-bisphosphate (FBP) in gluconeogenesis and the reverse reaction in glycolysis. In Saccharomyces cerevisiae (strain ATCC 204508 / S288c) (Baker's yeast), this protein is Fructose-bisphosphate aldolase (FBA1).